Consider the following 166-residue polypeptide: Small ribosomal subunit protein uS5 (166 aa).

In terms of domain architecture, S5 DRBM spans 11-74 (LQEKLIAVNR…EKARRNMINV (64 aa)).

Belongs to the universal ribosomal protein uS5 family. As to quaternary structure, part of the 30S ribosomal subunit. Contacts proteins S4 and S8.

With S4 and S12 plays an important role in translational accuracy. In terms of biological role, located at the back of the 30S subunit body where it stabilizes the conformation of the head with respect to the body. The protein is Small ribosomal subunit protein uS5 of Mannheimia succiniciproducens (strain KCTC 0769BP / MBEL55E).